Reading from the N-terminus, the 393-residue chain is Putative acid--amine ligase HI_0929 (393 aa).

Arginine 103–aspartate 105 provides a ligand contact to ATP. Residues aspartate 105, glutamate 117, and asparagine 119 each contribute to the Mg(2+) site. Residues lysine 267, lysine 303, glycine 310, glutamine 343, and alanine 378–threonine 380 each bind ATP.

It belongs to the glutathionylspermidine synthase preATP-grasp family.

Functionally, may be a ligase forming an amide bond. Shows ATPase activity. The polypeptide is Putative acid--amine ligase HI_0929 (Haemophilus influenzae (strain ATCC 51907 / DSM 11121 / KW20 / Rd)).